The primary structure comprises 1048 residues: Nonsense-mediated mRNA decay protein 5 (1048 aa).

In terms of domain architecture, Importin N-terminal spans 24–104; the sequence is AETHLKNASK…KDMLIKTMVS (81 aa). Ser977 is subject to Phosphoserine.

In terms of assembly, GTP-bound Ran dissociates the isolated NMD5/TFIIS complex.

The protein localises to the nucleus. It is found in the cytoplasm. Its function is as follows. Active in protein import into the nucleus. Its major import substrate is transcription elongation factor TFIIS. This is Nonsense-mediated mRNA decay protein 5 (NMD5) from Saccharomyces cerevisiae (strain ATCC 204508 / S288c) (Baker's yeast).